A 254-amino-acid chain; its full sequence is Protein Thf1 (254 aa).

Positions 182–241 (EEKMKKDLDLYRSNLEKMNQVLEVLEDALAVERQRREKAEAEAKAKTAEATVATETNDEQ) form a coiled coil. Over residues 215–228 (QRREKAEAEAKAKT) the composition is skewed to basic and acidic residues. The disordered stretch occupies residues 215 to 254 (QRREKAEAEAKAKTAEATVATETNDEQDEQKETSESGSDA).

This sequence belongs to the THF1 family.

Its function is as follows. May be involved in photosynthetic membrane biogenesis. The protein is Protein Thf1 of Picosynechococcus sp. (strain ATCC 27264 / PCC 7002 / PR-6) (Agmenellum quadruplicatum).